A 432-amino-acid chain; its full sequence is Glutamyl-tRNA reductase (432 aa).

Substrate is bound by residues 49-52 (TCNR), Ser101, 106-108 (EPQ), and Gln112. Residue Cys50 is the Nucleophile of the active site. 181 to 186 (GAGETI) contributes to the NADP(+) binding site. The disordered stretch occupies residues 407–432 (FPEKPGYQHPPIATPIVRTDDADPAP).

The protein belongs to the glutamyl-tRNA reductase family. As to quaternary structure, homodimer.

It carries out the reaction (S)-4-amino-5-oxopentanoate + tRNA(Glu) + NADP(+) = L-glutamyl-tRNA(Glu) + NADPH + H(+). Its pathway is porphyrin-containing compound metabolism; protoporphyrin-IX biosynthesis; 5-aminolevulinate from L-glutamyl-tRNA(Glu): step 1/2. Functionally, catalyzes the NADPH-dependent reduction of glutamyl-tRNA(Glu) to glutamate 1-semialdehyde (GSA). In Xanthomonas oryzae pv. oryzae (strain MAFF 311018), this protein is Glutamyl-tRNA reductase.